Reading from the N-terminus, the 378-residue chain is Manganese peroxidase 1 (378 aa).

Residues 1–21 (MAFKSLIAFVALAAAVRAAPT) form the signal peptide. Intrachain disulfides connect Cys-24-Cys-36, Cys-35-Cys-310, Cys-54-Cys-138, Cys-274-Cys-340, and Cys-362-Cys-369. The Mn(2+) site is built by Glu-56 and Glu-60. The Proton acceptor role is filled by His-67. Ca(2+) contacts are provided by Asp-68, Gly-83, Asp-85, and Ser-87. N-linked (GlcNAc...) asparagine glycosylation is found at Asn-97 and Asn-152. His-194 is a heme b binding site. Ser-195 provides a ligand contact to Ca(2+). Asp-200 contacts Mn(2+). Residues Asp-212, Thr-214, Thr-217, and Asp-219 each coordinate Ca(2+). An N-linked (GlcNAc...) asparagine glycan is attached at Asn-238.

Belongs to the peroxidase family. Ligninase subfamily. Ca(2+) serves as cofactor. The cofactor is heme b.

Its subcellular location is the secreted. It catalyses the reaction 2 Mn(2+) + H2O2 + 2 H(+) = 2 Mn(3+) + 2 H2O. In terms of biological role, catalyzes the oxidation of Mn(2+) to Mn(3+). The latter, acting as a diffusible redox mediator, is capable of oxidizing a variety of lignin compounds. In Phanerodontia chrysosporium (White-rot fungus), this protein is Manganese peroxidase 1 (MNP1).